A 116-amino-acid chain; its full sequence is Putative superoxide reductase (116 aa).

Residues His-20, His-46, His-52, Cys-101, and His-104 each contribute to the Fe cation site.

Belongs to the desulfoferrodoxin family. Requires Fe cation as cofactor.

The catalysed reaction is reduced [rubredoxin] + superoxide + 2 H(+) = oxidized [rubredoxin] + H2O2. Functionally, uses electrons from reduced NADP, by way of rubredoxin and an oxidoreductase, to catalyze the reduction of superoxide to hydrogen peroxide. In Methanocaldococcus jannaschii (strain ATCC 43067 / DSM 2661 / JAL-1 / JCM 10045 / NBRC 100440) (Methanococcus jannaschii), this protein is Putative superoxide reductase.